A 173-amino-acid polypeptide reads, in one-letter code: MVDSNNDAFDGEKSKTQIKRELHELVELGERLTTLKADTLARLPLTDELRKALAEASKHTAHGARKRHMSFVGKLMRVQDLDAIHALLEQMDSSSRQYNERFHSLERWRDRLIDGNDEDLERFVNEYPDTDRQQLRSLVRHAQHEKARNKPPAAARKVFKYIRDLDELQRGLR.

It belongs to the DarP family.

The protein resides in the cytoplasm. Its function is as follows. Member of a network of 50S ribosomal subunit biogenesis factors which assembles along the 30S-50S interface, preventing incorrect 23S rRNA structures from forming. Promotes peptidyl transferase center (PTC) maturation. The polypeptide is Dual-action ribosomal maturation protein DarP (Pseudomonas putida (strain GB-1)).